The primary structure comprises 134 residues: Large ribosomal subunit protein uL22 (134 aa).

It belongs to the universal ribosomal protein uL22 family. As to quaternary structure, part of the 50S ribosomal subunit.

Its function is as follows. This protein binds specifically to 23S rRNA; its binding is stimulated by other ribosomal proteins, e.g. L4, L17, and L20. It is important during the early stages of 50S assembly. It makes multiple contacts with different domains of the 23S rRNA in the assembled 50S subunit and ribosome. The globular domain of the protein is located near the polypeptide exit tunnel on the outside of the subunit, while an extended beta-hairpin is found that lines the wall of the exit tunnel in the center of the 70S ribosome. This is Large ribosomal subunit protein uL22 from Rhodococcus erythropolis (strain PR4 / NBRC 100887).